The chain runs to 653 residues: Thioredoxin domain-containing protein 3 homolog (653 aa).

The 106-residue stretch at 9–114 (LQETLNTQEA…QETIQETLKN (106 aa)) folds into the Thioredoxin domain. An intrachain disulfide couples Cys-38 to Cys-41. The interval 155–299 (KQITVALIKP…FFFPDFKPPT (145 aa)) is NDK 1. The interval 300–323 (YRSAKSAASRASGRRSKTPSQKPR) is disordered. The segment covering 301–310 (RSAKSAASRA) has biased composition (low complexity). 2 NDK regions span residues 324–459 (LQRT…IFHV) and 459–597 (VEQT…QFDW). The segment at 603 to 653 (QAEEGEVNETSGEQPTDEQSGETEKTEEDGEHEGAQSDQQQAVSEAMEKEE) is disordered. Over residues 617-633 (PTDEQSGETEKTEEDGE) the composition is skewed to acidic residues.

The protein in the C-terminal section; belongs to the NDK family. Testis-specific.

Its function is as follows. May be required during the final stages of sperm tail maturation. May act by reducing disulfide bonds within the sperm components. In Ciona intestinalis (Transparent sea squirt), this protein is Thioredoxin domain-containing protein 3 homolog (CiIC3).